Here is an 891-residue protein sequence, read N- to C-terminus: Microtubule-associated protein 10 (891 aa).

Disordered stretches follow at residues 325 to 355, 401 to 457, 504 to 679, and 702 to 844; these read AAVQ…PPQI, EDKG…VTKG, SWKG…KSSC, and TTEN…SNLS. The span at 407 to 417 shows a compositional bias: low complexity; it reads PSTKSTSPSES. Polar residues-rich tracts occupy residues 509–520 and 527–544; these read VSSSAAESQMSP and PTDS…SQLP. Composition is skewed to basic and acidic residues over residues 577–592 and 645–658; these read STTK…KQEM and TVDK…DGRQ. Polar residues-rich tracts occupy residues 665 to 679, 702 to 718, 726 to 749, 776 to 790, and 826 to 844; these read ADTS…KSSC, TTEN…SSTG, SRAS…SSVL, EASS…SQWT, and KSQS…SNLS.

Interacts (via middle region) with microtubules.

The protein localises to the cytoplasm. It localises to the cytoskeleton. It is found in the spindle pole. Its subcellular location is the microtubule organizing center. The protein resides in the centrosome. The protein localises to the midbody. Its function is as follows. Microtubule-associated protein (MAP) that plays a role in the regulation of cell division; promotes microtubule stability and participates in the organization of the spindle midzone and normal progress of cytokinesis. The sequence is that of Microtubule-associated protein 10 (Map10) from Mus musculus (Mouse).